The sequence spans 98 residues: NADH-ubiquinone oxidoreductase chain 4L (98 aa).

3 helical membrane-spanning segments follow: residues 1–21, 29–49, and 59–79; these read MSLI…GLLM, ALLC…LTAL, and MPII…ALLV.

Belongs to the complex I subunit 4L family. Core subunit of respiratory chain NADH dehydrogenase (Complex I) which is composed of 45 different subunits.

It localises to the mitochondrion inner membrane. It carries out the reaction a ubiquinone + NADH + 5 H(+)(in) = a ubiquinol + NAD(+) + 4 H(+)(out). Its function is as follows. Core subunit of the mitochondrial membrane respiratory chain NADH dehydrogenase (Complex I) which catalyzes electron transfer from NADH through the respiratory chain, using ubiquinone as an electron acceptor. Part of the enzyme membrane arm which is embedded in the lipid bilayer and involved in proton translocation. This chain is NADH-ubiquinone oxidoreductase chain 4L (MT-ND4L), found in Hyperoodon ampullatus (Northern bottlenose whale).